The following is a 411-amino-acid chain: METPEVPVGSLIDFGPEAPTSSPLEAPPPVLQDGDGSLGDGASESETTESADSENDMGESPSHPSWDQDRRSSSNESFSSNQSTESTQDEETLALRDFMRGYVEKIFSGGEDLDQEEKAKFGEYCSSENGKGREWFARYVSAQRCNSKCVSEATFYRLVQSFAVVLFECHQMDDFGPAKNLMTMCFTYYHIGKPQLLPPESREKPAGSIDSYLKSANSWLAEKKDIAERLLKNTSARTENVKGFFGGLETKLKGPLARRNEEDENKPQEKRPRAVTAYSPEDEKKGEKIYLYTHLKQQPIWHTLRFWNAAFFDAVHCERTKRSPTTRGDAGEEEEKREKWCHMTQEERDDSLRFNENITFGQLGTFTHNMLAFGLNKKLCNDFLKKQAVIGNLDEEQYKLLSDHIEQMATE.

2 disordered regions span residues 1–91 (METP…QDEE) and 253–280 (KGPL…AYSP). Acidic residues predominate over residues 46–57 (ETTESADSENDM). Residues 74-86 (SNESFSSNQSTES) show a composition bias toward low complexity. Basic and acidic residues predominate over residues 258 to 272 (RRNEEDENKPQEKRP). Position 279 is a phosphoserine (S279).

As to expression, widely expressed, highest levels in cerebellum, brain cortex, hippocampus, pons, putamen and amygdala. Highly expressed in neurons, but also present in glial cells. Slightly higher expression in the dorsolateral prefrontal cortex of schizophrenic patients compared to control individuals.

It is found in the cytoplasm. This is an uncharacterized protein from Homo sapiens (Human).